Consider the following 1130-residue polypeptide: Putative protein tag-278 (1130 aa).

Disordered stretches follow at residues Met-1 to Asn-92, Val-104 to Arg-129, and Asn-974 to Phe-1130. 2 coiled-coil regions span residues Ala-121–Lys-779 and Glu-805–Lys-1061. The span at Arg-983 to His-993 shows a compositional bias: basic and acidic residues. Positions Ser-999–Ser-1011 are enriched in polar residues. 2 stretches are compositionally biased toward basic and acidic residues: residues Met-1013–Pro-1057 and Arg-1068–Asn-1081. Over residues Leu-1082–Ser-1095 the composition is skewed to low complexity. Positions Thr-1116–Phe-1130 are enriched in basic and acidic residues.

The polypeptide is Putative protein tag-278 (tag-278) (Caenorhabditis elegans).